Consider the following 147-residue polypeptide: 3-dehydroquinate dehydratase 1 (147 aa).

The active-site Proton acceptor is the Tyr23. The substrate site is built by Asn75, His81, and Asp88. His101 serves as the catalytic Proton donor. Substrate is bound by residues 102–103 and Arg112; that span reads LS.

Belongs to the type-II 3-dehydroquinase family. Homododecamer.

It catalyses the reaction 3-dehydroquinate = 3-dehydroshikimate + H2O. The protein operates within metabolic intermediate biosynthesis; chorismate biosynthesis; chorismate from D-erythrose 4-phosphate and phosphoenolpyruvate: step 3/7. In terms of biological role, catalyzes a trans-dehydration via an enolate intermediate. This chain is 3-dehydroquinate dehydratase 1 (aroQ1), found in Pseudomonas aeruginosa (strain ATCC 15692 / DSM 22644 / CIP 104116 / JCM 14847 / LMG 12228 / 1C / PRS 101 / PAO1).